A 1582-amino-acid chain; its full sequence is Adhesion G protein-coupled receptor B1 (1582 aa).

A signal peptide spans 1-33 (MRGQAAAPGPIWILAPLLLLLLLLGRWARAASG). The Extracellular portion of the chain corresponds to 34–948 (ADIGPGTEQC…ATMDKVTVPS (915 aa)). Residue asparagine 64 is glycosylated (N-linked (GlcNAc...) asparagine). Positions 261-315 (AGGWKLWSLWGECTRDCGGGLQTRTRTCLPTLGVEGGGCEGVLEEGRLCNRKACG) constitute a TSP type-1 1 domain. Cystine bridges form between cysteine 273–cysteine 309, cysteine 277–cysteine 314, and cysteine 288–cysteine 299. Residues 313–335 (ACGPTGRSSSRSQSLRSTDARRR) form a disordered region. A compositionally biased stretch (low complexity) spans 319–329 (RSSSRSQSLRS). TSP type-1 domains lie at 354–407 (DPAA…AVCP), 409–462 (HGAW…ALCP), 467–520 (DGNW…QQCP), and 522–575 (DGKW…QRCP). Cystine bridges form between cysteine 366–cysteine 400, cysteine 370–cysteine 406, cysteine 381–cysteine 390, cysteine 421–cysteine 456, cysteine 425–cysteine 461, cysteine 436–cysteine 446, cysteine 479–cysteine 514, cysteine 483–cysteine 519, cysteine 494–cysteine 504, cysteine 534–cysteine 569, cysteine 538–cysteine 574, cysteine 549–cysteine 559, cysteine 581–cysteine 616, and cysteine 604–cysteine 634. Residue asparagine 401 is glycosylated (N-linked (GlcNAc...) asparagine). N-linked (GlcNAc...) asparagine glycosylation occurs at asparagine 607. Position 609 is a phosphothreonine (threonine 609). 4 N-linked (GlcNAc...) asparagine glycosylation sites follow: asparagine 692, asparagine 844, asparagine 877, and asparagine 881. Residues 760–939 (RDAYQVTDNL…AILAQLSADA (180 aa)) form the GAIN-B domain. 2 cysteine pairs are disulfide-bonded: cysteine 884/cysteine 921 and cysteine 909/cysteine 923. Residues 884–939 (CILWDETDGPSSSAPPQLGPWSWRGCRTVPLDALRTRCLCDRLSTFAILAQLSADA) form a GPS region. Positions 927–943 (STFAILAQLSADATMDK) are N-terminal stalk following vasculostatin-120 cleavage which is not required for signaling activity. A helical membrane pass occupies residues 949–969 (VTLIVGCGVSSLTLLMLVIIY). The Cytoplasmic segment spans residues 970 to 980 (VSVWRYIRSER). Residues 981 to 1001 (SVILINFCLSIISSNALILIG) form a helical membrane-spanning segment. Over 1002 to 1008 (QTQTRNK) the chain is Extracellular. A helical membrane pass occupies residues 1009–1029 (VVCTLVAAFLHFFFLSSFCWV). Residues 1030 to 1052 (LTEAWQSYMAVTGRLRSRLVRKR) are Cytoplasmic-facing. Residues 1053–1073 (FLCLGWGLPALVVAISVGFTK) traverse the membrane as a helical segment. The Extracellular segment spans residues 1074–1093 (AKGYSTMNYCWLSLEGGLLY). Residues 1094-1114 (AFVGPAAAVVLVNMVIGILVF) form a helical membrane-spanning segment. Residues 1115–1136 (NKLVSKDGITDKKLKERAGASL) are Cytoplasmic-facing. Residues 1137–1157 (WSSCVVLPLLALTWMSAVLAV) traverse the membrane as a helical segment. The Extracellular portion of the chain corresponds to 1158–1166 (TDRRSALFQ). A helical membrane pass occupies residues 1167–1187 (ILFAVFDSLEGFVIVMVHCIL). At 1188-1582 (RREVQDAVKC…QDIIDLQTEV (395 aa)) the chain is on the cytoplasmic side. The segment at 1363-1582 (YSINIDQMPQ…QDIIDLQTEV (220 aa)) is involved in interaction with MAGI1. The segment at 1382-1549 (PDASFPTRSP…AWVKKELEPL (168 aa)) is disordered. Residues 1389–1435 (RSPPAREPPGGAPPEVPPVQPPPPPPPPPPPPQQPIPPPPTLEPAPP) show a composition bias toward pro residues. Low complexity predominate over residues 1441–1455 (GEPAAHPGPSSGAGA). The residue at position 1467 (serine 1467) is a Phosphoserine. 2 stretches are compositionally biased toward basic and acidic residues: residues 1468 to 1484 (LERRKSRYAELDFEKIM) and 1491 to 1520 (QDMFQDLNRKLQHAAEKEKEVPGADSKPEK). The tract at residues 1579–1582 (QTEV) is indispensable for interaction with MAGI1.

The protein belongs to the G-protein coupled receptor 2 family. LN-TM7 subfamily. Interacts with ELMO1 and DOCK1. When bound to ELMO1 and DOCK1, acts as a module to promote apoptotic cell engulfment. Interacts with MDM2; the interaction results in inhibition of MDM2-mediated ubiquitination and degradation of DLG4/PSD95. Interacts with PARD3 and TIAM1; the interaction is required for correct dendritic localization of PARD3 and TIAM1 and for dendritic spine formation. Interacts with MAGI1, MAGI3 and BAIAP2. Interacts with PHYHIP. Interacts with DLG4 (via PDZ domain). Vasculostatin-120: Interacts with CD36. Vasculostatin-120: Interacts with ARRB2. Interacts with BAIAP3; this interaction is direct. Proteolytically cleaved to produce vasculostatin-40 and vasculostatin-120. Vasculostatin-40 is the major form and is produced through proteolytic cleavage by MMP14 between residues 321 and 329 with cleavage likely to be between Ser-326 and Leu-327. In terms of processing, ubiquitinated. In terms of tissue distribution, in brain, widespread expression in all neuropil-rich zones including spinal cord gray matter, cerebellar molecular layer, cerebral cortex, thalamic nuclei and basal ganglia with no expression in white matter (at protein level). In the cerebellar molecular layer, highly expressed in interneuron processes whereas Purkinje cells and their dendrites show weaker expression (at protein level). In the olfactory bulb, highly expressed in glomeruli (at protein level). In the retina, highly concentrated in the outer and inner plexiform layers (at protein level). Expressed in brain. Enriched in hippocampus and cortex. Also detected in other tissues including bone marrow and spleen.

Its subcellular location is the cell membrane. It is found in the cell projection. It localises to the phagocytic cup. The protein localises to the cell junction. The protein resides in the focal adhesion. Its subcellular location is the dendritic spine. It is found in the postsynaptic density. It localises to the secreted. Functionally, phosphatidylserine receptor which enhances the engulfment of apoptotic cells. Also mediates the binding and engulfment of Gram-negative bacteria. Stimulates production of reactive oxygen species by macrophages in response to Gram-negative bacteria, resulting in enhanced microbicidal macrophage activity. In the gastric mucosa, required for recognition and engulfment of apoptotic gastric epithelial cells. Promotes myoblast fusion. Activates the Rho pathway in a G-protein-dependent manner. Inhibits MDM2-mediated ubiquitination and degradation of DLG4/PSD95, promoting DLG4 stability and regulating synaptic plasticity. Required for the formation of dendritic spines by ensuring the correct localization of PARD3 and TIAM1. Potent inhibitor of angiogenesis in brain and may play a significant role as a mediator of the p53/TP53 signal in suppression of glioblastoma. Its function is as follows. Inhibits angiogenesis in a CD36-dependent manner. Inhibits angiogenesis. The sequence is that of Adhesion G protein-coupled receptor B1 from Mus musculus (Mouse).